The chain runs to 216 residues: Probable nicotinate-nucleotide adenylyltransferase (216 aa).

The protein belongs to the NadD family.

The enzyme catalyses nicotinate beta-D-ribonucleotide + ATP + H(+) = deamido-NAD(+) + diphosphate. It participates in cofactor biosynthesis; NAD(+) biosynthesis; deamido-NAD(+) from nicotinate D-ribonucleotide: step 1/1. Its function is as follows. Catalyzes the reversible adenylation of nicotinate mononucleotide (NaMN) to nicotinic acid adenine dinucleotide (NaAD). This is Probable nicotinate-nucleotide adenylyltransferase from Buchnera aphidicola subsp. Schizaphis graminum (strain Sg).